The chain runs to 545 residues: Tripartite motif-containing 55 (545 aa).

An RING-type zinc finger spans residues 26-82 (CPICLEMFTKPVVILPCQHNLCRKCASDIFQASNPYLPTRGGTTVASGGRFRCPSCR). Residues 119–161 (LDQPMCEEHEEERINIYCLNCEVPTCSLCKVFGAHKDCQVAPL) form a B box-type zinc finger. Zn(2+) contacts are provided by cysteine 124, histidine 127, cysteine 147, and histidine 153. The COS domain occupies 269 to 327 (MDEPEMAVFLQNAKTLLQKIVEASKAFQMEKLEQGYEIMSNFTVNLNREEKIIREIDFS). 3 disordered regions span residues 324–352 (IDFS…VEVE), 359–378 (IASS…SQLP), and 417–532 (SQQT…EPAR). Acidic residues predominate over residues 328 to 352 (REEEEEEDAGEIDEEGEGEDAVEVE). Over residues 417 to 428 (SQQTTQSETSGP) the composition is skewed to polar residues. Residues 474-485 (SSVQSAEVAEAA) show a composition bias toward low complexity. Polar residues predominate over residues 486-506 (TNEQAAVSGKESSSTAATSQI).

Targeted for degradation through the proteasomal and lysosomal pathways in the presence of SUMO3. As to expression, widely expressed in various tissues, besides skeletal muscle and heart, such as brain, lung, liver, spleen and kidney.

The protein resides in the nucleus. The protein localises to the cytoplasm. It catalyses the reaction S-ubiquitinyl-[E2 ubiquitin-conjugating enzyme]-L-cysteine + [acceptor protein]-L-lysine = [E2 ubiquitin-conjugating enzyme]-L-cysteine + N(6)-ubiquitinyl-[acceptor protein]-L-lysine.. Functionally, E3 ubiquitin ligase that plays an important role in regulating cardiac development and contractility, muscle growth, metabolism, and fiber-type differentiation. Acts as a critical factor that regulates cardiomyocyte size during development in concert with TRIM63 by regulating E2F1-mediated gene expression. Plays a role in apoptosis induction in cardiomyocytes by promoting ubiquitination of the DUSP1 phosphatase. Promotes non-canonical NF-kappa-B signaling and B-cell-mediated immune responses by mediating NFKB2 'Lys-48'-linked ubiquitination and processing. In turn, NFKB2 is further processed by valosin-containing protein/VCP, an ATPase that mediates ubiquitin-dependent protein degradation by the proteasome. May play a role in preventing macrophages from producing inflammatory factors and migrating by downregulating the level of nuclear NF-kappa-B subunit RELA. Modifies also PPARG via polyubiquitination and accelerates PPARG proteasomal degradation to inhibit its activity. The polypeptide is Tripartite motif-containing 55 (Trim55) (Mus musculus (Mouse)).